Consider the following 417-residue polypeptide: Serine hydroxymethyltransferase 1 (417 aa).

Residues Leu-121 and 125–127 (GHL) each bind (6S)-5,6,7,8-tetrahydrofolate. Residue Lys-229 is modified to N6-(pyridoxal phosphate)lysine. Residue 354–356 (SPF) participates in (6S)-5,6,7,8-tetrahydrofolate binding.

This sequence belongs to the SHMT family. As to quaternary structure, homodimer. Requires pyridoxal 5'-phosphate as cofactor.

The protein localises to the cytoplasm. The enzyme catalyses (6R)-5,10-methylene-5,6,7,8-tetrahydrofolate + glycine + H2O = (6S)-5,6,7,8-tetrahydrofolate + L-serine. It functions in the pathway one-carbon metabolism; tetrahydrofolate interconversion. The protein operates within amino-acid biosynthesis; glycine biosynthesis; glycine from L-serine: step 1/1. Its function is as follows. Catalyzes the reversible interconversion of serine and glycine with tetrahydrofolate (THF) serving as the one-carbon carrier. This reaction serves as the major source of one-carbon groups required for the biosynthesis of purines, thymidylate, methionine, and other important biomolecules. Also exhibits THF-independent aldolase activity toward beta-hydroxyamino acids, producing glycine and aldehydes, via a retro-aldol mechanism. The polypeptide is Serine hydroxymethyltransferase 1 (Pseudomonas syringae pv. syringae (strain B728a)).